We begin with the raw amino-acid sequence, 972 residues long: MRGARRAWDFLFVLQLLLRVQTGSSQPSVSPEELSPPSIHPAKSELIVSAGDEIRLFCTDPGSVKWTFETLGQLSENTHAEWIVEKAEAMNTGNYTCTNEGGLSSSIYVFVRDPEKLFLVDPPLYGKEDNDALVRCPLTDPEVTNYSLTGCEGKPLPKDLTFVADPKAGITIKNVKREYHRLCLHCSANQGGKSVLSKKFTLKVRAAIRAVPVVAVSKASYLLREGEEFAVMCLIKDVSSSVDSMWIRENSQTKAQVKRNSWHQGDFNFLRQEKLTISSARVNDSGVFMCYANNTFGSANVTTTLEVVDKGFINIFPMMNTTVFVNDGEDVDLIVEYEAYPKPEHRQWIYMNRTATDKWEDYPKSENESNIRYVSELHLTRLKGTEGGTYTFLVSNADVNSSVTFNVYVNTKPEILTHDRLMNGMLQCVAAGFPEPTIDWYFCPGTEQRCSVPVGPVDVQIQNSSVSPFGKLVIHSSIDYSAFKHNGTVECRAYNDVGKSSAFFNFAFKEQIHAHTLFTPLLIGFVIAAGMMCIIVMILTYKYLQKPMYEVQWKVVEEINGNNYVYIDPTQLPYDHKWEFPRNRLSFGKTLGAGAFGKVVEATAYGLIKSDAAMTVAVKMLKPSAHLTEREALMSELKVLSYLGNHMNIVNLLGACTIGGPTLVITEYCCYGDLLNFLRRKRDSFICSKQEDHAEAALYKNLLHSKESSCSDSTNEYMDMKPGVSYVVPTKADKRRSARIGSYIERDVTPAIMEDDELALDLEDLLSFSYQVAKGMAFLASKNCIHRDLAARNILLTHGRITKICDFGLARDIKNDSNYVVKGNARLPVKWMAPESIFNCVYTFESDVWSYGIFLWELFSLGSSPYPGMPVDSKFYKMIKEGFRMLSPEHAPAEMYDIMKTCWDADPLKRPTFKQIVQLIEKQISESTNHIYSNLANCSPHRENPAVDHSVRINSVGSSASSTQPLLVHEDV.

The first 25 residues, 1-25 (MRGARRAWDFLFVLQLLLRVQTGSS), serve as a signal peptide directing secretion. At 26 to 520 (QPSVSPEELS…QIHAHTLFTP (495 aa)) the chain is on the extracellular side. Ig-like C2-type domains lie at 27–112 (PSVS…VFVR), 121–205 (DPPL…LKVR), 212–308 (PVVA…LEVV), 317–410 (PMMN…VYVN), and 413–507 (PEIL…FNFA). Disulfide bonds link Cys58–Cys97, Cys136–Cys186, Cys151–Cys183, and Cys233–Cys290. 2 N-linked (GlcNAc...) asparagine glycosylation sites follow: Asn94 and Asn145. N-linked (GlcNAc...) asparagine glycans are attached at residues Asn283, Asn293, Asn300, Asn320, Asn352, Asn367, Asn400, Asn463, and Asn486. An intrachain disulfide couples Cys428 to Cys491. The chain crosses the membrane as a helical span at residues 521 to 541 (LLIGFVIAAGMMCIIVMILTY). Residues 542–972 (KYLQKPMYEV…TQPLLVHEDV (431 aa)) lie on the Cytoplasmic side of the membrane. 4 positions are modified to phosphotyrosine; by autocatalysis: Tyr543, Tyr549, Tyr564, and Tyr566. Tyr564 contributes to the Mg(2+) binding site. An important for interaction with phosphotyrosine-binding proteins region spans residues 564-566 (YVY). One can recognise a Protein kinase domain in the interval 585–933 (LSFGKTLGAG…ISESTNHIYS (349 aa)). ATP-binding positions include 592-599 (GAGAFGKV), Lys619, and 667-673 (EYCCYGD). Residues Tyr699, Tyr717, and Tyr726 each carry the phosphotyrosine; by autocatalysis modification. Phosphoserine; by PKC/PRKCA is present on residues Ser737 and Ser742. The active-site Proton acceptor is the Asp788. Arg792 provides a ligand contact to ATP. Residues Asn793 and Asp806 each coordinate Mg(2+). At Ser817 the chain carries Phosphoserine. At Tyr819 the chain carries Phosphotyrosine; by autocatalysis. Ser887 is subject to Phosphoserine. 2 positions are modified to phosphotyrosine; by autocatalysis: Tyr896 and Tyr932. Ser955 carries the phosphoserine modification.

This sequence belongs to the protein kinase superfamily. Tyr protein kinase family. CSF-1/PDGF receptor subfamily. In terms of assembly, monomer in the absence of bound KITLG/SCF. Homodimer in the presence of bound KITLG/SCF, forming a heterotetramer with two KITLG/SCF molecules. Interacts (via phosphorylated tyrosine residues) with the adapter proteins GRB2 and GRB7 (via SH2 domain), and SH2B2/APS. Interacts (via C-terminus) with MPDZ (via the tenth PDZ domain). Interacts (via phosphorylated tyrosine residues) with PIK3R1 and PIK3 catalytic subunit. Interacts (via phosphorylated tyrosine) with CRK (isoform Crk-II), FYN, SHC1 and MATK/CHK (via SH2 domain). Interacts with LYN and FES/FPS. Interacts (via phosphorylated tyrosine residues) with the protein phosphatases PTPN6/SHP-1 (via SH2 domain), PTPN11/SHP-2 (via SH2 domain) and PTPRU. Interacts with PLCG1. Interacts with DOK1 and TEC. Interacts with IL1RAP (independent of stimulation with KITLG/SCF). A mast cell-specific KITLG/SCF-induced interleukin-33 signaling complex contains IL1RL1, IL1RAP, KIT and MYD88. Ubiquitinated by SOCS6. KIT is rapidly ubiquitinated after autophosphorylation induced by KITLG/SCF binding, leading to internalization and degradation. Post-translationally, autophosphorylated on tyrosine residues. KITLG/SCF binding promotes autophosphorylation. Phosphorylated tyrosine residues are important for interaction with specific binding partners.

Its subcellular location is the cell membrane. It catalyses the reaction L-tyrosyl-[protein] + ATP = O-phospho-L-tyrosyl-[protein] + ADP + H(+). Present in an inactive conformation in the absence of bound ligand. KITLG/SCF binding leads to dimerization and activation by autophosphorylation on tyrosine residues. Activity is down-regulated by PRKCA-mediated phosphorylation on serine residues. Functionally, tyrosine-protein kinase that acts as a cell-surface receptor for the cytokine KITLG/SCF and plays an essential role in the regulation of cell survival and proliferation, hematopoiesis, stem cell maintenance, gametogenesis, mast cell development, migration and function, and in melanogenesis. In response to KITLG/SCF binding, KIT can activate several signaling pathways. Phosphorylates PIK3R1, PLCG1, SH2B2/APS and CBL. Activates the AKT1 signaling pathway by phosphorylation of PIK3R1, the regulatory subunit of phosphatidylinositol 3-kinase. Activated KIT also transmits signals via GRB2 and activation of RAS, RAF1 and the MAP kinases MAPK1/ERK2 and/or MAPK3/ERK1. Promotes activation of STAT family members STAT1, STAT3, STAT5A and STAT5B. Activation of PLCG1 leads to the production of the cellular signaling molecules diacylglycerol and inositol 1,4,5-trisphosphate. KIT signaling is modulated by protein phosphatases, and by rapid internalization and degradation of the receptor. Activated KIT promotes phosphorylation of the protein phosphatases PTPN6/SHP-1 and PTPRU, and of the transcription factors STAT1, STAT3, STAT5A and STAT5B. Promotes phosphorylation of PIK3R1, CBL, CRK (isoform Crk-II), LYN, MAPK1/ERK2 and/or MAPK3/ERK1, PLCG1, SRC and SHC1. This is Mast/stem cell growth factor receptor Kit (KIT) from Sus scrofa (Pig).